Here is a 101-residue protein sequence, read N- to C-terminus: Large ribosomal subunit protein bL20 (101 aa).

Belongs to the bacterial ribosomal protein bL20 family.

In terms of biological role, binds directly to 23S ribosomal RNA and is necessary for the in vitro assembly process of the 50S ribosomal subunit. It is not involved in the protein synthesizing functions of that subunit. This Carsonella ruddii (strain PV) protein is Large ribosomal subunit protein bL20 (rplT).